A 482-amino-acid polypeptide reads, in one-letter code: Methylenetetrahydrofolate--tRNA-(uracil-5-)-methyltransferase TrmFO (482 aa).

20 to 25 contributes to the FAD binding site; that stretch reads GGGLAG.

This sequence belongs to the MnmG family. TrmFO subfamily. It depends on FAD as a cofactor.

It localises to the cytoplasm. It carries out the reaction uridine(54) in tRNA + (6R)-5,10-methylene-5,6,7,8-tetrahydrofolate + NADH + H(+) = 5-methyluridine(54) in tRNA + (6S)-5,6,7,8-tetrahydrofolate + NAD(+). The catalysed reaction is uridine(54) in tRNA + (6R)-5,10-methylene-5,6,7,8-tetrahydrofolate + NADPH + H(+) = 5-methyluridine(54) in tRNA + (6S)-5,6,7,8-tetrahydrofolate + NADP(+). Functionally, catalyzes the folate-dependent formation of 5-methyl-uridine at position 54 (M-5-U54) in all tRNAs. This is Methylenetetrahydrofolate--tRNA-(uracil-5-)-methyltransferase TrmFO from Rhodopseudomonas palustris (strain HaA2).